Reading from the N-terminus, the 112-residue chain is UPF0235 protein Atu2660 (112 aa).

Belongs to the UPF0235 family.

This is UPF0235 protein Atu2660 from Agrobacterium fabrum (strain C58 / ATCC 33970) (Agrobacterium tumefaciens (strain C58)).